The following is a 273-amino-acid chain: Octanoyltransferase (273 aa).

The 220-residue stretch at 35 to 254 (DRVPDTCLLL…HLRDILENAE (220 aa)) folds into the BPL/LPL catalytic domain. Residues 73–80 (RGGKITWH), 184–186 (AIG), and 197–199 (GFA) each bind substrate. Residue Cys215 is the Acyl-thioester intermediate of the active site.

The protein belongs to the LipB family.

It is found in the cytoplasm. The catalysed reaction is octanoyl-[ACP] + L-lysyl-[protein] = N(6)-octanoyl-L-lysyl-[protein] + holo-[ACP] + H(+). Its pathway is protein modification; protein lipoylation via endogenous pathway; protein N(6)-(lipoyl)lysine from octanoyl-[acyl-carrier-protein]: step 1/2. In terms of biological role, catalyzes the transfer of endogenously produced octanoic acid from octanoyl-acyl-carrier-protein onto the lipoyl domains of lipoate-dependent enzymes. Lipoyl-ACP can also act as a substrate although octanoyl-ACP is likely to be the physiological substrate. This chain is Octanoyltransferase, found in Streptomyces griseus subsp. griseus (strain JCM 4626 / CBS 651.72 / NBRC 13350 / KCC S-0626 / ISP 5235).